The chain runs to 189 residues: Protein seele (189 aa).

Residues 1-17 (MLTKALILFGLLALAQG) form the signal peptide. The Saposin B-type domain maps to 23 to 176 (REVKCHVCKA…EQASYCDESP (154 aa)). 3 disulfide bridges follow: cysteine 27–cysteine 172, cysteine 30–cysteine 165, and cysteine 85–cysteine 136. The Prevents secretion from ER motif lies at 186 to 189 (KEEL).

It belongs to the canopy family.

Its subcellular location is the endoplasmic reticulum. Functionally, involved in embryonic dorsal-ventral patterning which is generated by a series of serine protease processing events where gd processes snk which cleaves ea which then processes spz into the activating ligand for the Toll receptor. Required during this process for the secretion of ea from the developing embryo into the perivitelline space and for ea processing. This chain is Protein seele, found in Drosophila melanogaster (Fruit fly).